The sequence spans 522 residues: MLGKHTKLFFGVSLVALIVSVILAAWGFPKIVSKQIQKNIQIDNSSVMFEKWRKIPMPLTFNVYVFNVTNVEDVNNGAKPRLQQIGPYAYKEYRERTVLGYGDNDTVSYTLKKTFIFDQEASGLLSEDDEVTVIHFSYMAAILTVNDMMPSITGVVNGALEQFFTNLTDPFLRVKVKDLFFDGVYVNCAGNHSALGLVCGKLKADAPQTMRPAGDGNGFYFSMFSHMNRTESGPYEMIRGRENIKELGHIISYKGKSFMKNWGNDMYCGQLNGSDASIFPPIDENNVPEKLYTFEPEVCRSLYASLVGKSSIFNMSAYYYEISSDALASKSANPGNKCYCKKNWSANHDGCLIMGILNLMPCQDAPAIASLPHFYLASEELLEYFDGGISPDKEKHNTYIYLEPVTGVVLKGLRRLQFNIELRNIPMVPQLAKVPTGLFPLLWIEEGAELPDSIIQELRQSHTLLGYVEAVRWALLAIAIVATAISAIAVARSGLIPVWPRNANSVSFILSPHPNSDVNKVH.

The Cytoplasmic segment spans residues 1 to 7 (MLGKHTK). A helical transmembrane segment spans residues 8–28 (LFFGVSLVALIVSVILAAWGF). Residues 29–469 (PKIVSKQIQK…QSHTLLGYVE (441 aa)) lie on the Extracellular side of the membrane. Asn-44, Asn-67, Asn-104, Asn-166, Asn-191, Asn-228, Asn-272, Asn-314, and Asn-343 each carry an N-linked (GlcNAc...) asparagine glycan. Cystine bridges form between Cys-268-Cys-338, Cys-299-Cys-362, and Cys-340-Cys-351. The helical transmembrane segment at 470 to 490 (AVRWALLAIAIVATAISAIAV) threads the bilayer. The Cytoplasmic segment spans residues 491 to 522 (ARSGLIPVWPRNANSVSFILSPHPNSDVNKVH).

It belongs to the CD36 family. In terms of tissue distribution, detected in both male and female antennal tissues. Expression is two to three fold higher in male compared to female antenna. Detected at low levels in all body tissues except the female abdomen.

Its subcellular location is the cell membrane. Plays an olfactory role that is not restricted to pheromone sensitivity. The protein is Sensory neuron membrane protein 2 of Ostrinia furnacalis (Asian corn borer).